Consider the following 349-residue polypeptide: MVRAKRKLDHIEYALSTGQSRTHGFHDIDFVHQSLPNSSYETITCETKIGELSLSSPIFINAMTGGGGEKTLHINEQLAYVAKHHNLAMAVGSQMAALKDESEAASYKIIRKVNPNGIFFANLGSEATVEQAELAVDMIEANALQIHLNVIQELTMPEGDRDFTGVLQRIEKIVLNSKVPVIVKEVGFGMSKETMQQLASVGVTAIDIGGQGGTNFAAVENERRQRMLSYFNNWGIQTATSIIEATSTNNNLSFIASGGIQTALDVAKAIALGANTTAFAGYFLRILMEDGIEKLVDEIDLLHTDLKFIMTALGAKTIEELQSVPLVVKGETYHWLTQRGIDTTHYSRR.

6-7 (RK) lines the substrate pocket. FMN contacts are provided by residues 62–64 (AMT), serine 93, and asparagine 122. Residue glutamine 152 coordinates substrate. Mg(2+) is bound at residue glutamate 153. Residues lysine 184, threonine 214, 258–259 (GG), and 280–281 (AG) each bind FMN.

Belongs to the IPP isomerase type 2 family. In terms of assembly, homooctamer. Dimer of tetramers. Requires FMN as cofactor. NADPH is required as a cofactor. The cofactor is Mg(2+).

It is found in the cytoplasm. It catalyses the reaction isopentenyl diphosphate = dimethylallyl diphosphate. Involved in the biosynthesis of isoprenoids. Catalyzes the 1,3-allylic rearrangement of the homoallylic substrate isopentenyl (IPP) to its allylic isomer, dimethylallyl diphosphate (DMAPP). In Bacillus cereus (strain 03BB102), this protein is Isopentenyl-diphosphate delta-isomerase.